The primary structure comprises 281 residues: NAD kinase (281 aa).

Asp61 acts as the Proton acceptor in catalysis. NAD(+) is bound by residues 61-62 (DG), 134-135 (ND), Arg145, Asp164, 175-180 (TAYSLS), and Gln234.

It belongs to the NAD kinase family. The cofactor is a divalent metal cation.

It is found in the cytoplasm. It catalyses the reaction NAD(+) + ATP = ADP + NADP(+) + H(+). Its function is as follows. Involved in the regulation of the intracellular balance of NAD and NADP, and is a key enzyme in the biosynthesis of NADP. Catalyzes specifically the phosphorylation on 2'-hydroxyl of the adenosine moiety of NAD to yield NADP. In Clostridium botulinum (strain Loch Maree / Type A3), this protein is NAD kinase.